The primary structure comprises 910 residues: MTIPNSDFMIENGVCDFPTTPEEEKRIVSELITESEDNLKEGNLYFVISKRWYTSWEKYVEQSTKEYISGESSEASRPGPIDNHDIIESESDVNDPQLRRLLMERVDYVLVPQEVWKRLVEWYSGGPPIERKLICQGFYTRSYSVEVYPLCLMLTDGRDESRTVIRLGKQASIRELYEKVCALTGVPQEKAHIWDYFDKRKNGLLDSLSYKSLEESSLHMDQDILLEVDGSSSSQSAMSSTGNELALVPLEPSRSSVTIAGGPTLSNGHSTTSNFSLFPRITSEDDGSNSLSILGKGEKGGLAGLSNLGNTCFMNSALQCLAHTPPIVEYFLQDYSDDINRDNPLGMCGELAIAFGDLLKKLWSSGRNSVAPRAFKTKLARFAPQFSGYNQHDSQELLAFLLDGLHEDLNKVKRKPYIELKDSDSRPDDEVAEELWNYHKARNDSVIVDVCQGQYKSTLVCPACGKISITFDPFMYLSVPLPSTLTRSMTVTVFYCDGSHLPMPYTVIVPKNGSIRDLITALGTACLLAEDESLLLAEVYDHKIFKYFENPLDSLSSIKDDEHIVAYRLNQMPKGSGKAKLEILHGGQKRPILESVRGRDVKLFGTPFVTYVNTEPLSGADIDAVLSRFLSPLHKVHAPSKIHNGSENGHLPDATVDEASEILSSPDTEIDDASDRELSFRIFLTDERGLNFKPLQSESSISLGIATRVLVEWNEGEHERYDSSYLSDLPEVHKTSFSAKKTRQESISLFSCLEAFLAEEPLGPDDMWFCPSCKEHRQANKKLDLWKLPDILVFHLKRFTYSRYLKNKIDTFVNFPVHDLDLSKYVKNKNDQSYLYELYAVSNHYGGLGGGHYTAYAKLIDDNEWYHFDDSHVSSVNESEIKNSAAYVLFYRRVRSETETQTVEMSTDMD.

A DUSP domain is found at 19-134 (TTPEEEKRIV…GGPPIERKLI (116 aa)). The interval 68–89 (ISGESSEASRPGPIDNHDIIES) is disordered. In terms of domain architecture, USP spans 303 to 894 (AGLSNLGNTC…AAYVLFYRRV (592 aa)). Cys312 acts as the Nucleophile in catalysis. The active-site Proton acceptor is His852.

This sequence belongs to the peptidase C19 family.

It carries out the reaction Thiol-dependent hydrolysis of ester, thioester, amide, peptide and isopeptide bonds formed by the C-terminal Gly of ubiquitin (a 76-residue protein attached to proteins as an intracellular targeting signal).. In terms of biological role, recognizes and hydrolyzes the peptide bond at the C-terminal Gly of ubiquitin. Involved in the processing of poly-ubiquitin precursors as well as that of ubiquitinated proteins. The polypeptide is Ubiquitin carboxyl-terminal hydrolase 9 (UBP9) (Arabidopsis thaliana (Mouse-ear cress)).